Here is a 167-residue protein sequence, read N- to C-terminus: Cofilin-2 (167 aa).

An ADF-H domain is found at 4–153 (GVTVNDEVIK…KDRCTLADKL (150 aa)). The short motif at 30-34 (KKRKK) is the Nuclear localization signal element.

It belongs to the actin-binding proteins ADF family.

The protein resides in the nucleus matrix. It localises to the cytoplasm. It is found in the cytoskeleton. Its function is as follows. Controls reversibly actin polymerization and depolymerization in a pH-sensitive manner. It has the ability to bind G- and F-actin in a 1:1 ratio of cofilin to actin. It is the major component of intranuclear and cytoplasmic actin rods. The chain is Cofilin-2 (cfl2) from Xenopus tropicalis (Western clawed frog).